A 385-amino-acid polypeptide reads, in one-letter code: Torsin-3A (385 aa).

Positions 1–21 are cleaved as a signal peptide; that stretch reads MFLGALWLLLLLPLRPPGAQG. N-linked (GlcNAc...) asparagine glycosylation occurs at N110. 155 to 162 contacts ATP; that stretch reads GWSGTGKN.

It belongs to the ClpA/ClpB family. Torsin subfamily. In terms of assembly, interacts with TOR1AIP1. In terms of processing, N-glycosylated.

It localises to the cytoplasm. The protein localises to the endoplasmic reticulum lumen. This is Torsin-3A (Tor3a) from Mus musculus (Mouse).